The primary structure comprises 404 residues: S-adenosylmethionine synthase (404 aa).

H17 is a binding site for ATP. D19 is a Mg(2+) binding site. Position 45 (E45) interacts with K(+). L-methionine contacts are provided by E58 and Q101. Positions 101–111 (QSPDINRGVDR) are flexible loop. ATP contacts are provided by residues 172-174 (DAK), 245-246 (RF), D254, 260-261 (RK), A277, and K281. D254 contacts L-methionine. K285 serves as a coordination point for L-methionine.

It belongs to the AdoMet synthase family. As to quaternary structure, homotetramer; dimer of dimers. Requires Mg(2+) as cofactor. K(+) serves as cofactor.

The protein localises to the cytoplasm. It carries out the reaction L-methionine + ATP + H2O = S-adenosyl-L-methionine + phosphate + diphosphate. Its pathway is amino-acid biosynthesis; S-adenosyl-L-methionine biosynthesis; S-adenosyl-L-methionine from L-methionine: step 1/1. Functionally, catalyzes the formation of S-adenosylmethionine (AdoMet) from methionine and ATP. The overall synthetic reaction is composed of two sequential steps, AdoMet formation and the subsequent tripolyphosphate hydrolysis which occurs prior to release of AdoMet from the enzyme. The protein is S-adenosylmethionine synthase of Pelodictyon phaeoclathratiforme (strain DSM 5477 / BU-1).